We begin with the raw amino-acid sequence, 288 residues long: MVLPMQNKIVKIGNIEVANDKPFVLFAGLNVLESRDLAMQVCEHFVKVTDKLKIPYVFKSSFDKANRSSIHSYRGPGMEEGLKIFAELKKTFGVKVITDVHEIHQAKPVAEVVDVIQLPAFLARQTDLVEAMARTGAVINVKKPQFLSPGQMGNIVDKFAECGNDKIILCDRGTNFGYDNLVVDTLGFNIMKKVSKGSPVILDATHALQCRDPFGAASGGRRGQVAELSRAGLAVGLAGLFIESHPNPDKALCDGPSALPLSKVEPFLQQMKALDDLVKSFPELNTEN.

Belongs to the KdsA family.

The protein resides in the cytoplasm. The catalysed reaction is D-arabinose 5-phosphate + phosphoenolpyruvate + H2O = 3-deoxy-alpha-D-manno-2-octulosonate-8-phosphate + phosphate. It functions in the pathway carbohydrate biosynthesis; 3-deoxy-D-manno-octulosonate biosynthesis; 3-deoxy-D-manno-octulosonate from D-ribulose 5-phosphate: step 2/3. It participates in bacterial outer membrane biogenesis; lipopolysaccharide biosynthesis. The protein is 2-dehydro-3-deoxyphosphooctonate aldolase of Bdellovibrio bacteriovorus (strain ATCC 15356 / DSM 50701 / NCIMB 9529 / HD100).